We begin with the raw amino-acid sequence, 419 residues long: Transcription termination factor Rho (419 aa).

The Rho RNA-BD domain maps to 48–123 (DIFGDGVLEI…LKVNEVNYDK (76 aa)). RNA-binding stretches follow at residues 61–66 (GFGFLR), 78–80 (DIY), and 108–110 (ERY). Residues 169 to 174 (GRGQRG), 181 to 186 (KAGKTM), and Arg212 each bind ATP. The interval 284–288 (VLTGG) is RNA-binding 2.

It belongs to the Rho family. As to quaternary structure, homohexamer. The homohexamer assembles into an open ring structure.

Functionally, facilitates transcription termination by a mechanism that involves Rho binding to the nascent RNA, activation of Rho's RNA-dependent ATPase activity, and release of the mRNA from the DNA template. The chain is Transcription termination factor Rho from Salmonella typhi.